We begin with the raw amino-acid sequence, 352 residues long: Protein Wnt-4a (352 aa).

An N-terminal signal peptide occupies residues Met1–Ala22. Disulfide bonds link Cys78–Cys89, Cys128–Cys136, Cys138–Cys155, Cys206–Cys220, Cys208–Cys215, Cys280–Cys312, Cys297–Cys307, Cys311–Cys351, Cys327–Cys342, Cys329–Cys339, and Cys334–Cys335. Residue Asn88 is glycosylated (N-linked (GlcNAc...) asparagine). The O-palmitoleoyl serine; by PORCN moiety is linked to residue Ser212. Asn298 carries an N-linked (GlcNAc...) asparagine glycan.

This sequence belongs to the Wnt family. In terms of processing, palmitoleoylation is required for efficient binding to frizzled receptors. Depalmitoleoylation leads to Wnt signaling pathway inhibition. Caudal forebrain and neural keel, the floor plate, the gill slit and the developing pronephros.

The protein localises to the secreted. The protein resides in the extracellular space. It is found in the extracellular matrix. In terms of biological role, ligand for members of the frizzled family of seven transmembrane receptors. Plays an important role in embryonic development. This Danio rerio (Zebrafish) protein is Protein Wnt-4a (wnt4a).